Here is a 156-residue protein sequence, read N- to C-terminus: Putative pre-16S rRNA nuclease (156 aa).

It belongs to the YqgF nuclease family.

Its subcellular location is the cytoplasm. Could be a nuclease involved in processing of the 5'-end of pre-16S rRNA. The chain is Putative pre-16S rRNA nuclease from Aromatoleum aromaticum (strain DSM 19018 / LMG 30748 / EbN1) (Azoarcus sp. (strain EbN1)).